The sequence spans 885 residues: Initiator protein NS1 (885 aa).

Positions Ala-404–Pro-477 are disordered. Residues Ser-409–Thr-423 are compositionally biased toward polar residues. Positions Gln-452–Ala-465 are enriched in gly residues.

Belongs to the parvoviruses initiator protein NS1 family. As to quaternary structure, homooligomer. Mg(2+) is required as a cofactor.

The protein resides in the host nucleus. It carries out the reaction ATP + H2O = ADP + phosphate + H(+). In terms of biological role, multifunctional protein which displays endonuclease and helicase activities required for initiating and directing viral DNA replication. Also plays a role in viral packaging and transactivation of several promoters. Binds site-specifically to 2-3 approximate tandem copies within the origins of replication (Ori), unwinds this hairpin region and nicks one DNA strand thereby initiating the rolling circle replication (RCR). The chain is Initiator protein NS1 from Bombyx mori densovirus (BmDNV).